The chain runs to 389 residues: D-alanyl-D-alanine carboxypeptidase DacF (389 aa).

The signal sequence occupies residues 1 to 23 (MKRLLSTLLIGIMLLTFAPSAFA). Serine 64 acts as the Acyl-ester intermediate in catalysis. Residue lysine 67 is the Proton acceptor of the active site. Serine 124 is a catalytic residue. Lysine 230 is a binding site for substrate.

It belongs to the peptidase S11 family.

The protein localises to the secreted. The enzyme catalyses Preferential cleavage: (Ac)2-L-Lys-D-Ala-|-D-Ala. Also transpeptidation of peptidyl-alanyl moieties that are N-acyl substituents of D-alanine.. The protein operates within cell wall biogenesis; peptidoglycan biosynthesis. Removes C-terminal D-alanyl residues from sugar-peptide cell wall precursors. This chain is D-alanyl-D-alanine carboxypeptidase DacF (dacF), found in Bacillus subtilis (strain 168).